The primary structure comprises 263 residues: Eukaryotic translation initiation factor 3 subunit J-B (263 aa).

Acidic residues-rich tracts occupy residues 1-13 (MADS…DNFE) and 30-50 (EGED…EEKE). 2 disordered regions span residues 1–75 (MADS…DKIK) and 214–235 (KQKQ…VPGG). The stretch at 30–127 (EGEDEEEDVK…EADMELAREA (98 aa)) forms a coiled coil. The segment covering 51–75 (EEKKVEQKIAEVKPPEKKKLSDKIK) has biased composition (basic and acidic residues).

Belongs to the eIF-3 subunit J family. In terms of assembly, component of the eukaryotic translation initiation factor 3 (eIF-3) complex, which is composed of 13 subunits: eif3a, eif3b, eif3c, eif3d, eif3e, eif3f, eif3g, eif3h, eif3i, eif3j, eif3k, eif3l and eif3m.

Its subcellular location is the cytoplasm. Functionally, component of the eukaryotic translation initiation factor 3 (eIF-3) complex, which is involved in protein synthesis of a specialized repertoire of mRNAs and, together with other initiation factors, stimulates binding of mRNA and methionyl-tRNAi to the 40S ribosome. The eIF-3 complex specifically targets and initiates translation of a subset of mRNAs involved in cell proliferation. The protein is Eukaryotic translation initiation factor 3 subunit J-B (eif3jb) of Danio rerio (Zebrafish).